The following is a 157-amino-acid chain: Tripartite terminase subunit 2 (157 aa).

Positions 1-69 (MSWAKQRVPF…DGEDGHALPD (69 aa)) are disordered. The segment covering 11 to 27 (LDDDDGEEENDVQDDVD) has biased composition (acidic residues).

It belongs to the herpesviridae TRM2 protein family. Associates with TRM1 and TRM3 to form the tripartite terminase complex.

Its subcellular location is the host nucleus. Component of the molecular motor that translocates viral genomic DNA in empty capsid during DNA packaging. Forms a tripartite terminase complex together with TRM1 and TRM3 in the host cytoplasm. Once the complex reaches the host nucleus, it interacts with the capsid portal vertex. This portal forms a ring in which genomic DNA is translocated into the capsid. In Homo sapiens (Human), this protein is Tripartite terminase subunit 2.